The following is a 317-amino-acid chain: Transaldolase (317 aa).

Lysine 126 serves as the catalytic Schiff-base intermediate with substrate.

This sequence belongs to the transaldolase family. Type 1 subfamily. Homodimer.

The protein resides in the cytoplasm. The catalysed reaction is D-sedoheptulose 7-phosphate + D-glyceraldehyde 3-phosphate = D-erythrose 4-phosphate + beta-D-fructose 6-phosphate. The protein operates within carbohydrate degradation; pentose phosphate pathway; D-glyceraldehyde 3-phosphate and beta-D-fructose 6-phosphate from D-ribose 5-phosphate and D-xylulose 5-phosphate (non-oxidative stage): step 2/3. In terms of biological role, transaldolase is important for the balance of metabolites in the pentose-phosphate pathway. The protein is Transaldolase of Burkholderia ambifaria (strain MC40-6).